The primary structure comprises 117 residues: Eukaryotic translation initiation factor 4E-binding protein (117 aa).

T37 and T46 each carry phosphothreonine. A YXXXXLphi motif; atypical motif is present at residues 54–60; the sequence is YERAFMK. S65 carries the post-translational modification Phosphoserine. Phosphothreonine is present on T70.

This sequence belongs to the eIF4E-binding protein family. As to quaternary structure, hypophosphorylated Thor/4E-BP competes with eIF4G1 to interact with eIF4E1; insulin stimulated Akt1 or Tor phosphorylation of Thor/4E-BP causes dissociation of the complex allowing eIF4G1 to bind and consequent initiation of translation. Phosphorylation at Thr-37, Thr-46, Ser-65 and Thr-70, corresponding to the hyperphosphorylated form, impairs its ability to prevent the interaction between eIF4G1 and eIF4E1, without affecting its interaction with free eIF4E1. Phosphorylated in rtesponse to insulin. Phosphorylation at Thr-46 is regulated by Tor and constitutes the major phosphorylation event that regulates activity. Widely expressed.

In terms of biological role, repressor of translation initiation that regulates eIF4E1 activity by preventing its assembly into the eIF4F complex. Hypophosphorylated form competes with eIF4G1 and strongly binds to eIF4E1, leading to repress translation. In contrast, hyperphosphorylated form dissociates from eIF4E1, allowing interaction between eIF4G1 and eIF4E1, leading to initiation of translation. Acts as a regulator of various biological processes, such as innate immunity, cell growth or synaptic transmission. Acts downstream of phosphoinositide-3-kinase (PI3K) to regulate cell growth. Extends lifespan upon dietary restriction by regulating the mitochondrial translation. Acts as a regulator of lifespan in response to cold by regulating the mitochondrial translation. Acts as a negative regulator of presynaptic release of neurotransmitter in motor neurons: Thor expression is induced in response to insulin signaling, leading to prevent of translation of complexin (cpx), a protein known to regulate the exocytosis of synaptic vesicles. Acts as a negative regulator of synaptic strength at the neuromuscular junction: Thor expression in response to acute fasting prevents translation, thereby suppressing retrograde synaptic enhancement. This chain is Eukaryotic translation initiation factor 4E-binding protein, found in Drosophila melanogaster (Fruit fly).